The sequence spans 349 residues: Sterol-4-alpha-carboxylate 3-dehydrogenase ERG26, decarboxylating (349 aa).

NADP(+)-binding positions include 11–17, 62–63, and 84–86; these read GGSGFLG, DL, and CAS. Serine 124 and tyrosine 151 together coordinate substrate. NADP(+)-binding positions include tyrosine 151, lysine 155, and 179-182; that span reads PAGI. Lysine 155 acts as the Proton donor in catalysis.

It belongs to the 3-beta-HSD family. As to quaternary structure, heterotetramer of ERG25, ERG26, ERG27 and ERG28. ERG28 acts as a scaffold to tether ERG27 and other 4,4-demethylation-related enzymes, forming a demethylation enzyme complex, in the endoplasmic reticulum.

Its subcellular location is the endoplasmic reticulum membrane. The catalysed reaction is 4beta-methylzymosterol-4alpha-carboxylate + NADP(+) = 3-dehydro-4-methylzymosterol + CO2 + NADPH. It participates in steroid biosynthesis; zymosterol biosynthesis; zymosterol from lanosterol: step 4/6. Inhibited by FR171456, a natural product with broad antifungal activity. Sterol-4-alpha-carboxylate 3-dehydrogenase; part of the third module of ergosterol biosynthesis pathway that includes the late steps of the pathway. ERG26 is a catalytic component of the C-4 demethylation complex that catalyzes the oxidative decarboxylation that results in a reduction of the 3-beta-hydroxy group at the C-3 carbon to an oxo group. The third module or late pathway involves the ergosterol synthesis itself through consecutive reactions that mainly occur in the endoplasmic reticulum (ER) membrane. Firstly, the squalene synthase ERG9 catalyzes the condensation of 2 farnesyl pyrophosphate moieties to form squalene, which is the precursor of all steroids. Squalene synthase is crucial for balancing the incorporation of farnesyl diphosphate (FPP) into sterol and nonsterol isoprene synthesis. Secondly, the squalene epoxidase ERG1 catalyzes the stereospecific oxidation of squalene to (S)-2,3-epoxysqualene, which is considered to be a rate-limiting enzyme in steroid biosynthesis. Then, the lanosterol synthase ERG7 catalyzes the cyclization of (S)-2,3 oxidosqualene to lanosterol, a reaction that forms the sterol core. In the next steps, lanosterol is transformed to zymosterol through a complex process involving various demethylation, reduction and desaturation reactions. The lanosterol 14-alpha-demethylase ERG11 (also known as CYP51) catalyzes C14-demethylation of lanosterol to produce 4,4'-dimethyl cholesta-8,14,24-triene-3-beta-ol, which is critical for ergosterol biosynthesis. The C-14 reductase ERG24 reduces the C14=C15 double bond of 4,4-dimethyl-cholesta-8,14,24-trienol to produce 4,4-dimethyl-cholesta-8,24-dienol. 4,4-dimethyl-cholesta-8,24-dienol is substrate of the C-4 demethylation complex ERG25-ERG26-ERG27 in which ERG25 catalyzes the three-step monooxygenation required for the demethylation of 4,4-dimethyl and 4alpha-methylsterols, ERG26 catalyzes the oxidative decarboxylation that results in a reduction of the 3-beta-hydroxy group at the C-3 carbon to an oxo group, and ERG27 is responsible for the reduction of the keto group on the C-3. ERG28 has a role as a scaffold to help anchor ERG25, ERG26 and ERG27 to the endoplasmic reticulum and ERG29 regulates the activity of the iron-containing C4-methylsterol oxidase ERG25. Then, the sterol 24-C-methyltransferase ERG6 catalyzes the methyl transfer from S-adenosyl-methionine to the C-24 of zymosterol to form fecosterol. The C-8 sterol isomerase ERG2 catalyzes the reaction which results in unsaturation at C-7 in the B ring of sterols and thus converts fecosterol to episterol. The sterol-C5-desaturase ERG3 then catalyzes the introduction of a C-5 double bond in the B ring to produce 5-dehydroepisterol. The C-22 sterol desaturase ERG5 further converts 5-dehydroepisterol into ergosta-5,7,22,24(28)-tetraen-3beta-ol by forming the C-22(23) double bond in the sterol side chain. Finally, ergosta-5,7,22,24(28)-tetraen-3beta-ol is substrate of the C-24(28) sterol reductase ERG4 to produce ergosterol. The chain is Sterol-4-alpha-carboxylate 3-dehydrogenase ERG26, decarboxylating from Saccharomyces cerevisiae (strain ATCC 204508 / S288c) (Baker's yeast).